Here is a 428-residue protein sequence, read N- to C-terminus: UPF0761 membrane protein Ppha_1623 (428 aa).

6 helical membrane passes run 52–72 (LLSI…FVVF), 108–128 (SVPI…ISTV), 148–168 (FTLY…SLAA), 189–209 (LLSF…YMLV), 216–233 (FVHA…FELS), and 252–272 (GALS…IVVL).

It belongs to the UPF0761 family.

It localises to the cell inner membrane. The polypeptide is UPF0761 membrane protein Ppha_1623 (Pelodictyon phaeoclathratiforme (strain DSM 5477 / BU-1)).